A 410-amino-acid polypeptide reads, in one-letter code: D-3-phosphoglycerate dehydrogenase (410 aa).

NAD(+)-binding positions include 162–163 (HI), D182, 239–241 (AAR), and D265. Residue R241 is part of the active site. Residue E270 is part of the active site. The active-site Proton donor is the H293. Position 293–296 (293–296 (HIGG)) interacts with NAD(+). In terms of domain architecture, ACT spans 341–410 (RLLHIHENRP…DGTIRARVLY (70 aa)).

The protein belongs to the D-isomer specific 2-hydroxyacid dehydrogenase family.

The catalysed reaction is (2R)-3-phosphoglycerate + NAD(+) = 3-phosphooxypyruvate + NADH + H(+). The enzyme catalyses (R)-2-hydroxyglutarate + NAD(+) = 2-oxoglutarate + NADH + H(+). It functions in the pathway amino-acid biosynthesis; L-serine biosynthesis; L-serine from 3-phospho-D-glycerate: step 1/3. Its activity is regulated as follows. In bacteria displays feedback inhibition by L-serine. In terms of biological role, catalyzes the reversible oxidation of 3-phospho-D-glycerate to 3-phosphonooxypyruvate, the first step of the phosphorylated L-serine biosynthesis pathway. Also catalyzes the reversible oxidation of 2-hydroxyglutarate to 2-oxoglutarate. This chain is D-3-phosphoglycerate dehydrogenase (serA), found in Haemophilus influenzae (strain ATCC 51907 / DSM 11121 / KW20 / Rd).